The chain runs to 561 residues: Urocanate hydratase (561 aa).

NAD(+)-binding positions include 52 to 53, Gln-130, 176 to 178, Glu-196, Arg-201, 242 to 243, 263 to 267, 273 to 274, and Tyr-322; these read GG, GMG, NA, QTSAH, and YL. Cys-410 is a catalytic residue. Residue Gly-492 coordinates NAD(+).

It belongs to the urocanase family. NAD(+) serves as cofactor.

The protein resides in the cytoplasm. It catalyses the reaction 4-imidazolone-5-propanoate = trans-urocanate + H2O. Its pathway is amino-acid degradation; L-histidine degradation into L-glutamate; N-formimidoyl-L-glutamate from L-histidine: step 2/3. Functionally, catalyzes the conversion of urocanate to 4-imidazolone-5-propionate. This is Urocanate hydratase from Salmonella agona (strain SL483).